Here is a 319-residue protein sequence, read N- to C-terminus: CD2 antigen cytoplasmic tail-binding protein 2 homolog (319 aa).

Disordered stretches follow at residues 1–57 and 105–124; these read MASK…EDDV and NAFD…KNEP. The span at 12 to 24 shows a compositional bias: basic and acidic residues; the sequence is KVKEESFKKHTLD. Ser-25 and Ser-30 each carry phosphoserine. A compositionally biased stretch (acidic residues) spans 25 to 47; the sequence is SDEEDSDDYEREYLNDSDIEGGE. At Tyr-37 the chain carries Phosphotyrosine. Position 41 is a phosphoserine (Ser-41). Residues 109–124 show a composition bias toward basic and acidic residues; the sequence is PAKDEENSSDEEKNEP. A GYF domain is found at 260 to 316; the sequence is EVTWEFKWSQDETDIQGPFSTEKMLKWSQENYFKNGVYVRKCGENTNFYTSNRIDFD.

Its subcellular location is the nucleus. In terms of biological role, required for embryonic epithelial tissue repair, but not for the assembly of the actomyosin cable at the wound edge. Probably acts downstream of rl in the regulation of Ddc and msn transcription to promote wound healing. This chain is CD2 antigen cytoplasmic tail-binding protein 2 homolog (holn1), found in Drosophila melanogaster (Fruit fly).